A 200-amino-acid polypeptide reads, in one-letter code: uncharacterized protein (200 aa).

Positions 1–21 (MSNSAQRDARNSRDESARASD) are disordered. Residues 7–21 (RDARNSRDESARASD) show a composition bias toward basic and acidic residues.

This is an uncharacterized protein from Mycobacterium tuberculosis (strain ATCC 25618 / H37Rv).